The sequence spans 86 residues: Small ribosomal subunit protein bS20 (86 aa).

The tract at residues 1–25 (MANIKSQQKRNKTNERARLRNKSVK) is disordered.

Belongs to the bacterial ribosomal protein bS20 family.

In terms of biological role, binds directly to 16S ribosomal RNA. The chain is Small ribosomal subunit protein bS20 from Mycobacterium avium (strain 104).